Reading from the N-terminus, the 514-residue chain is ATP synthase subunit alpha (514 aa).

170-177 (GDRQTGKT) is an ATP binding site.

This sequence belongs to the ATPase alpha/beta chains family. In terms of assembly, F-type ATPases have 2 components, CF(1) - the catalytic core - and CF(0) - the membrane proton channel. CF(1) has five subunits: alpha(3), beta(3), gamma(1), delta(1), epsilon(1). CF(0) has three main subunits: a(1), b(2) and c(9-12). The alpha and beta chains form an alternating ring which encloses part of the gamma chain. CF(1) is attached to CF(0) by a central stalk formed by the gamma and epsilon chains, while a peripheral stalk is formed by the delta and b chains.

The protein resides in the cell inner membrane. It catalyses the reaction ATP + H2O + 4 H(+)(in) = ADP + phosphate + 5 H(+)(out). Its function is as follows. Produces ATP from ADP in the presence of a proton gradient across the membrane. The alpha chain is a regulatory subunit. The chain is ATP synthase subunit alpha from Psychrobacter cryohalolentis (strain ATCC BAA-1226 / DSM 17306 / VKM B-2378 / K5).